Consider the following 66-residue polypeptide: Large ribosomal subunit protein bL33c (66 aa).

This sequence belongs to the bacterial ribosomal protein bL33 family.

The protein resides in the plastid. It is found in the chloroplast. This is Large ribosomal subunit protein bL33c from Illicium oligandrum (Star anise).